Consider the following 218-residue polypeptide: Monomethylamine corrinoid protein 1 (218 aa).

The 91-residue stretch at 1 to 91 folds into the B12-binding N-terminal domain; that stretch reads MANQEIFDKL…ELEKTKVEGE (91 aa). One can recognise a B12-binding domain in the interval 94–218; that stretch reads TGLAITFVAE…AAKVALNIMK (125 aa). His107 contributes to the methylcob(III)alamin binding site.

This sequence belongs to the methylamine corrinoid protein family. In terms of assembly, can form a complex with MtmB.

It participates in one-carbon metabolism; methanogenesis from methylamine. In terms of biological role, acts as a methyl group carrier between MtmB and MtbA. The protein is Monomethylamine corrinoid protein 1 (mtmC1) of Methanosarcina acetivorans (strain ATCC 35395 / DSM 2834 / JCM 12185 / C2A).